A 269-amino-acid chain; its full sequence is Bis(5'-nucleosyl)-tetraphosphatase, symmetrical (269 aa).

This sequence belongs to the Ap4A hydrolase family.

The enzyme catalyses P(1),P(4)-bis(5'-adenosyl) tetraphosphate + H2O = 2 ADP + 2 H(+). Functionally, hydrolyzes diadenosine 5',5'''-P1,P4-tetraphosphate to yield ADP. The polypeptide is Bis(5'-nucleosyl)-tetraphosphatase, symmetrical (Vibrio vulnificus (strain YJ016)).